Here is a 153-residue protein sequence, read N- to C-terminus: Deoxyuridine 5'-triphosphate nucleotidohydrolase (153 aa).

Residues Ser-75, Gly-88, Asp-91, Tyr-94, Lys-99, Arg-143, Phe-148, and Gly-149 each contribute to the dUMP site.

Belongs to the dUTPase family. Homotrimer. It depends on Mg(2+) as a cofactor.

The enzyme catalyses dUTP + H2O = dUMP + diphosphate + H(+). It functions in the pathway pyrimidine metabolism; dUMP biosynthesis; dUMP from dCTP (dUTP route): step 2/2. Involved in nucleotide metabolism via production of dUMP, the immediate precursor of thymidine nucleotides, and decreases the intracellular concentration of dUTP so that uracil cannot be incorporated into DNA. The protein is Deoxyuridine 5'-triphosphate nucleotidohydrolase (DUT1) of Eremothecium gossypii (strain ATCC 10895 / CBS 109.51 / FGSC 9923 / NRRL Y-1056) (Yeast).